The following is a 34-amino-acid chain: MAEKESTSPHLIVPILLLVGWIVGCIIVIYIVFF.

A helical transmembrane segment spans residues 12 to 32; it reads IVPILLLVGWIVGCIIVIYIV.

Homooligomer. Can also form heterooligomers with other sarcoplasmic/endoplasmic reticulum calcium ATPase (SERCA) regulators ARLN, ERLN, PLN and SLN. Monomer. Interacts with ATP2A1/SERCA1; the interaction results in activation of ATP2A1. Interacts as a monomer with ATP2A2/SERCA2; the interaction results in activation of ATP2A2. As to expression, highly expressed in heart (at protein level). Detected in heart and soleus, a postural muscle group of the hindlimb containing the highest enrichment of slow-twitch muscle fibers. Also expressed in diaphragm, which contains some slow-twitch fibers. Not detected in the quadriceps, a fast-twitch muscle group, or in cardiac atrial muscle. Not expressed in the prenatal heart but gradually increases in abundance postnatally.

Its subcellular location is the sarcoplasmic reticulum membrane. Functionally, enhances the activity of ATP2A1/SERCA1 ATPase in sarcoplasmic reticulum by displacing ATP2A1/SERCA1 inhibitors, thereby acting as a key regulator of skeletal muscle activity. Also enhances the activity of the ATP2A2/SERCA2 ATPase. Does not directly stimulate SERCA pump activity. Binds preferentially to the phosphorylated E1 and E2 conformational forms of ATP2A2 which predominate at high Ca(2+) concentrations during the systolic phase of the cardiac cycle. Competes with ATP2A2 inhibitor phospholamban (PLN) for binding to ATP2A2 and displaces PLN. Can activate ATP2A2 directly in the absence of PLN. Also enhances sarcoplasmic reticulum Ca(2+) uptake and myocyte contractility by displacing the SERCA inhibitory peptides sarcolipin (SLN) and myoregulin (MRLN). This chain is Sarcoplasmic/endoplasmic reticulum calcium ATPase regulator DWORF, found in Mus musculus (Mouse).